A 141-amino-acid polypeptide reads, in one-letter code: MVHSQLPVAGPLRLLCALLLLPSATMIPGGLSPRSVTDPDVQEAAEFAVQEYNALSANAYYYKQLRIVEAQSQVVSGAKYYLTMELMKTKCAKTTGKPKVYKEIQNCELPPKAQQEKLNCRFQVWSRPWLEKMELTKMSCN.

The signal sequence occupies residues 1–26 (MVHSQLPVAGPLRLLCALLLLPSATM). Residues 29 to 129 (GGLSPRSVTD…CRFQVWSRPW (101 aa)) enclose the Cystatin domain. The Secondary area of contact motif lies at 73 to 77 (QVVSG). 2 disulfide bridges follow: cysteine 91-cysteine 107 and cysteine 120-cysteine 140.

It belongs to the cystatin family. As to expression, expressed at a low level by the venom gland (at protein level).

The protein localises to the secreted. In terms of biological role, inhibits various C1 cysteine proteases including cathepsin L, papain and cathepsin B. This protein has no toxic activity and its function in the venom is unknown. It may play a role as a housekeeping or regulatory protein. In Pseudechis porphyriacus (Red-bellied black snake), this protein is Cystatin.